We begin with the raw amino-acid sequence, 303 residues long: Glycine--tRNA ligase alpha subunit (303 aa).

Belongs to the class-II aminoacyl-tRNA synthetase family. Tetramer of two alpha and two beta subunits.

Its subcellular location is the cytoplasm. It catalyses the reaction tRNA(Gly) + glycine + ATP = glycyl-tRNA(Gly) + AMP + diphosphate. The polypeptide is Glycine--tRNA ligase alpha subunit (Salmonella paratyphi A (strain ATCC 9150 / SARB42)).